The primary structure comprises 436 residues: Antilisterial bacteriocin subtilosin biosynthesis protein AlbD (436 aa).

10 helical membrane passes run 27–47, 51–71, 112–132, 134–154, 166–186, 187–207, 240–260, 270–290, 315–335, and 395–415; these read IAAG…QAGI, VLGK…MVFL, TLFF…SGAQ, LFWL…GVML, FLLH…MPAV, TIPL…PVFL, AMLL…FQMM, IYIV…LYSI, FYSG…GFIS, and ATLA…LIIV.

The protein localises to the cell membrane. In terms of biological role, involved in the production of the bacteriocin subtilosin. Required for immunity to subtilosin. The chain is Antilisterial bacteriocin subtilosin biosynthesis protein AlbD (albD) from Bacillus subtilis.